A 140-amino-acid polypeptide reads, in one-letter code: Large ribosomal subunit protein uL11 (140 aa).

It belongs to the universal ribosomal protein uL11 family. In terms of assembly, part of the ribosomal stalk of the 50S ribosomal subunit. Interacts with L10 and the large rRNA to form the base of the stalk. L10 forms an elongated spine to which L12 dimers bind in a sequential fashion forming a multimeric L10(L12)X complex. Post-translationally, one or more lysine residues are methylated.

Its function is as follows. Forms part of the ribosomal stalk which helps the ribosome interact with GTP-bound translation factors. The protein is Large ribosomal subunit protein uL11 of Geobacter sp. (strain M21).